We begin with the raw amino-acid sequence, 115 residues long: MNPLIQEITKKQLRDDIPDFRPGDNVRVHAKIVEGERERIQLFEGVVIKRHGVGISATYTVRKISNGVGVERTFPLHSPRVEKIEVTRHGQVRRAKLYYLRALRGKAARIREKRR.

It belongs to the bacterial ribosomal protein bL19 family.

In terms of biological role, this protein is located at the 30S-50S ribosomal subunit interface and may play a role in the structure and function of the aminoacyl-tRNA binding site. This is Large ribosomal subunit protein bL19 from Lacticaseibacillus casei (strain BL23) (Lactobacillus casei).